The primary structure comprises 78 residues: Small ribosomal subunit protein bS16c (78 aa).

Belongs to the bacterial ribosomal protein bS16 family.

The protein localises to the plastid. Its subcellular location is the chloroplast. This chain is Small ribosomal subunit protein bS16c, found in Phaeodactylum tricornutum (strain CCAP 1055/1).